A 101-amino-acid polypeptide reads, in one-letter code: Small ribosomal subunit protein uS14 (101 aa).

Belongs to the universal ribosomal protein uS14 family. As to quaternary structure, part of the 30S ribosomal subunit. Contacts proteins S3 and S10.

Binds 16S rRNA, required for the assembly of 30S particles and may also be responsible for determining the conformation of the 16S rRNA at the A site. In Pseudomonas putida (strain W619), this protein is Small ribosomal subunit protein uS14.